The sequence spans 1100 residues: ATP-dependent DNA helicase mph1 (1100 aa).

Residues 1 to 21 show a composition bias toward acidic residues; it reads MSDSDDYLQDDPDDQAFDDFA. The tract at residues 1-250 is disordered; the sequence is MSDSDDYLQD…RPSSFMQSSN (250 aa). Over residues 38 to 61 the composition is skewed to low complexity; the sequence is RNQTRNTTSRRNEDNSVASDSDSF. The segment covering 84–94 has biased composition (basic and acidic residues); sequence FADHPENEASS. Residues 104 to 117 show a composition bias toward polar residues; the sequence is NNPQENIFVTQLTQ. Residues 135–146 are compositionally biased toward pro residues; it reads PPPPPPPAPTKP. Polar residues-rich tracts occupy residues 182–191 and 200–209; these read RLSFSTAQNS and NAPTNTAQTE. The span at 212–223 shows a compositional bias: acidic residues; sequence DFLDDIPDDAFD. Residues 237–249 show a composition bias toward low complexity; that stretch reads SNSSRPSSFMQSS. The Helicase ATP-binding domain maps to 317-485; that stretch reads ITQKGLFHNL…AVIDGLEISK (169 aa). An ATP-binding site is contributed by 330 to 337; the sequence is LPTGLGKT. Positions 433–436 match the DEAH box motif; the sequence is DEAH. Residues 655-829 enclose the Helicase C-terminal domain; it reads YLKQVVLNHF…GTRFTFHDDK (175 aa). Disordered stretches follow at residues 850–913 and 1003–1100; these read PEEN…PEPV and RRPA…LGRR. 2 stretches are compositionally biased toward basic residues: residues 863 to 875 and 1019 to 1028; these read RRGRVPKKPPKKF and GNKKRLRKGR. Residues 1053–1066 show a composition bias toward polar residues; it reads QPISPEQLLSSFTD. A compositionally biased stretch (acidic residues) spans 1082-1092; sequence LELDADFEAPD.

This sequence belongs to the DEAD box helicase family. DEAH subfamily. FANCM sub-subfamily. In terms of assembly, interacts with the MHF histone-fold complex to form the FANCM-MHF complex.

The protein localises to the nucleus. It catalyses the reaction ATP + H2O = ADP + phosphate + H(+). In terms of biological role, ATP-dependent DNA helicase involved in DNA damage repair by homologous recombination and in genome maintenance. Capable of unwinding D-loops. Plays a role in limiting crossover recombinants during mitotic DNA double-strand break (DSB) repair. Component of a FANCM-MHF complex which promotes gene conversion at blocked replication forks, probably by reversal of the stalled fork. In Aspergillus terreus (strain NIH 2624 / FGSC A1156), this protein is ATP-dependent DNA helicase mph1.